A 517-amino-acid chain; its full sequence is tRNA-2-methylthio-N(6)-dimethylallyladenosine synthase (517 aa).

Positions 29 to 146 (RTYQVRTYGC…LPTLLERARH (118 aa)) constitute an MTTase N-terminal domain. [4Fe-4S] cluster contacts are provided by Cys-38, Cys-75, Cys-109, Cys-183, Cys-187, and Cys-190. A Radical SAM core domain is found at 169-405 (RESAYAAWVS…VELQESISLQ (237 aa)). Positions 408-475 (QALVGQTVEL…PHHLIADAGV (68 aa)) constitute a TRAM domain.

It belongs to the methylthiotransferase family. MiaB subfamily. In terms of assembly, monomer. It depends on [4Fe-4S] cluster as a cofactor.

It localises to the cytoplasm. The enzyme catalyses N(6)-dimethylallyladenosine(37) in tRNA + (sulfur carrier)-SH + AH2 + 2 S-adenosyl-L-methionine = 2-methylsulfanyl-N(6)-dimethylallyladenosine(37) in tRNA + (sulfur carrier)-H + 5'-deoxyadenosine + L-methionine + A + S-adenosyl-L-homocysteine + 2 H(+). Catalyzes the methylthiolation of N6-(dimethylallyl)adenosine (i(6)A), leading to the formation of 2-methylthio-N6-(dimethylallyl)adenosine (ms(2)i(6)A) at position 37 in tRNAs that read codons beginning with uridine. This is tRNA-2-methylthio-N(6)-dimethylallyladenosine synthase from Mycolicibacterium paratuberculosis (strain ATCC BAA-968 / K-10) (Mycobacterium paratuberculosis).